A 358-amino-acid chain; its full sequence is Holliday junction branch migration complex subunit RuvB (358 aa).

The segment at 1–183 is large ATPase domain (RuvB-L); sequence MAEPSLVSGG…FGFTGHLEFY (183 aa). Residues L22, R23, G64, K67, T68, T69, 130-132, R173, Y183, and R220 contribute to the ATP site; that span reads EDF. Residue T68 participates in Mg(2+) binding. The segment at 184-254 is small ATPAse domain (RuvB-S); it reads SVAELELVLR…SASAALDMYE (71 aa). A head domain (RuvB-H) region spans residues 257 to 358; sequence ERGLDRLDRS…NHAESVDTVG (102 aa). The DNA site is built by R312 and R317.

The protein belongs to the RuvB family. In terms of assembly, homohexamer. Forms an RuvA(8)-RuvB(12)-Holliday junction (HJ) complex. HJ DNA is sandwiched between 2 RuvA tetramers; dsDNA enters through RuvA and exits via RuvB. An RuvB hexamer assembles on each DNA strand where it exits the tetramer. Each RuvB hexamer is contacted by two RuvA subunits (via domain III) on 2 adjacent RuvB subunits; this complex drives branch migration. In the full resolvosome a probable DNA-RuvA(4)-RuvB(12)-RuvC(2) complex forms which resolves the HJ.

It is found in the cytoplasm. It catalyses the reaction ATP + H2O = ADP + phosphate + H(+). Functionally, the RuvA-RuvB-RuvC complex processes Holliday junction (HJ) DNA during genetic recombination and DNA repair, while the RuvA-RuvB complex plays an important role in the rescue of blocked DNA replication forks via replication fork reversal (RFR). RuvA specifically binds to HJ cruciform DNA, conferring on it an open structure. The RuvB hexamer acts as an ATP-dependent pump, pulling dsDNA into and through the RuvAB complex. RuvB forms 2 homohexamers on either side of HJ DNA bound by 1 or 2 RuvA tetramers; 4 subunits per hexamer contact DNA at a time. Coordinated motions by a converter formed by DNA-disengaged RuvB subunits stimulates ATP hydrolysis and nucleotide exchange. Immobilization of the converter enables RuvB to convert the ATP-contained energy into a lever motion, pulling 2 nucleotides of DNA out of the RuvA tetramer per ATP hydrolyzed, thus driving DNA branch migration. The RuvB motors rotate together with the DNA substrate, which together with the progressing nucleotide cycle form the mechanistic basis for DNA recombination by continuous HJ branch migration. Branch migration allows RuvC to scan DNA until it finds its consensus sequence, where it cleaves and resolves cruciform DNA. This chain is Holliday junction branch migration complex subunit RuvB, found in Paenarthrobacter aurescens (strain TC1).